Consider the following 84-residue polypeptide: Small ribosomal subunit protein bS20 (84 aa).

A disordered region spans residues 1 to 22; the sequence is MPAPTKRERQNRKRFERNRSVR. Residues 9–22 show a composition bias toward basic residues; it reads RQNRKRFERNRSVR.

This sequence belongs to the bacterial ribosomal protein bS20 family.

Binds directly to 16S ribosomal RNA. The chain is Small ribosomal subunit protein bS20 from Rubrobacter xylanophilus (strain DSM 9941 / JCM 11954 / NBRC 16129 / PRD-1).